The primary structure comprises 322 residues: tRNA U34 carboxymethyltransferase (322 aa).

Residues Lys-92, Trp-106, Lys-111, Gly-131, 153-155 (DPT), 181-182 (VE), Met-196, Tyr-200, and Arg-315 each bind carboxy-S-adenosyl-L-methionine.

The protein belongs to the class I-like SAM-binding methyltransferase superfamily. CmoB family. In terms of assembly, homotetramer.

The enzyme catalyses carboxy-S-adenosyl-L-methionine + 5-hydroxyuridine(34) in tRNA = 5-carboxymethoxyuridine(34) in tRNA + S-adenosyl-L-homocysteine + H(+). Catalyzes carboxymethyl transfer from carboxy-S-adenosyl-L-methionine (Cx-SAM) to 5-hydroxyuridine (ho5U) to form 5-carboxymethoxyuridine (cmo5U) at position 34 in tRNAs. The chain is tRNA U34 carboxymethyltransferase from Colwellia psychrerythraea (strain 34H / ATCC BAA-681) (Vibrio psychroerythus).